The sequence spans 161 residues: Eukaryotic translation initiation factor 5A-2 (161 aa).

Lysine 54 carries the post-translational modification Hypusine.

The protein belongs to the eIF-5A family. Lys-54 undergoes hypusination, a unique post-translational modification that consists in the addition of a butylamino group from spermidine to lysine side chain and leads to the formation of a hypusine residue. eIF-5As are the only known proteins to undergo this modification, which is essential for their function. Expressed in the somatic tissues.

Its subcellular location is the cytoplasm. Translation factor that promotes translation elongation and termination, particularly upon ribosome stalling at specific amino acid sequence contexts. Binds between the exit (E) and peptidyl (P) site of the ribosome and promotes rescue of stalled ribosome: specifically required for efficient translation of polyproline-containing peptides as well as other motifs that stall the ribosome. Acts as a ribosome quality control (RQC) cofactor by joining the RQC complex to facilitate peptidyl transfer during CAT tailing step. Acts in somatic tissues and its function in the soma is essential for normal growth and reproduction. This chain is Eukaryotic translation initiation factor 5A-2 (iff-2), found in Caenorhabditis elegans.